We begin with the raw amino-acid sequence, 975 residues long: Glycine dehydrogenase (decarboxylating) (975 aa).

Lys-723 carries the post-translational modification N6-(pyridoxal phosphate)lysine.

Belongs to the GcvP family. The glycine cleavage system is composed of four proteins: P, T, L and H. Pyridoxal 5'-phosphate is required as a cofactor.

It carries out the reaction N(6)-[(R)-lipoyl]-L-lysyl-[glycine-cleavage complex H protein] + glycine + H(+) = N(6)-[(R)-S(8)-aminomethyldihydrolipoyl]-L-lysyl-[glycine-cleavage complex H protein] + CO2. In terms of biological role, the glycine cleavage system catalyzes the degradation of glycine. The P protein binds the alpha-amino group of glycine through its pyridoxal phosphate cofactor; CO(2) is released and the remaining methylamine moiety is then transferred to the lipoamide cofactor of the H protein. The chain is Glycine dehydrogenase (decarboxylating) from Burkholderia thailandensis (strain ATCC 700388 / DSM 13276 / CCUG 48851 / CIP 106301 / E264).